Here is a 421-residue protein sequence, read N- to C-terminus: Nuclear speckle RNA-binding protein B (421 aa).

Disordered stretches follow at residues 1-64 (MDNR…VNIY), 86-114 (TGQT…MVDT), and 197-226 (TDPQ…GIPH). Pro residues predominate over residues 33–44 (PLAPPHPQPQPP). The segment covering 89-103 (TSTSTTSSSSSSSTS) has biased composition (low complexity). Residues 323–409 (NTLYVEGLPS…KILRLQFFRN (87 aa)) enclose the RRM domain.

In terms of tissue distribution, isoform 1: Expressed in root meristems, lateral root primordia, root vascular tissues and cotyledon vascular tissues. Isoform 2: Expressed in root meristems, lateral root primordia and root vascular tissues.

The protein localises to the nucleus speckle. In terms of biological role, alternative splicing (AS) regulator that binds to specific mRNAs and modulates auxin effects on the transcriptome. Displaced from its targets upon binding to AS competitor long non-coding RNA (ASCO-RNA). The polypeptide is Nuclear speckle RNA-binding protein B (Arabidopsis thaliana (Mouse-ear cress)).